A 60-amino-acid polypeptide reads, in one-letter code: Large ribosomal subunit protein uL30 (60 aa).

The protein belongs to the universal ribosomal protein uL30 family. As to quaternary structure, part of the 50S ribosomal subunit.

This Symbiobacterium thermophilum (strain DSM 24528 / JCM 14929 / IAM 14863 / T) protein is Large ribosomal subunit protein uL30.